The chain runs to 339 residues: Extracellular matrix protein-binding protein emp (339 aa).

The first 26 residues, 1 to 26, serve as a signal peptide directing secretion; that stretch reads MKKKLFVLTMSTLFATQLINSNHANA.

The protein resides in the cell surface. Its function is as follows. Adhesin that binds to the host cell extracellular matrix proteins fibronectin, fibrinogen, collagen, and vitronectin. The polypeptide is Extracellular matrix protein-binding protein emp (emp) (Staphylococcus aureus (strain bovine RF122 / ET3-1)).